We begin with the raw amino-acid sequence, 641 residues long: Sodium-dependent nutrient amino acid transporter 1 (641 aa).

Residues 1-34 are disordered; it reads MELKGVQPSNGSANGNGTTNAASTEKADTEKQTA. Residues 1-38 lie on the Cytoplasmic side of the membrane; the sequence is MELKGVQPSNGSANGNGTTNAASTEKADTEKQTAERTN. Over residues 9–24 the composition is skewed to low complexity; that stretch reads SNGSANGNGTTNAAST. Residues 25 to 34 are compositionally biased toward basic and acidic residues; the sequence is EKADTEKQTA. The next 3 helical transmembrane spans lie at 39 to 59, 72 to 92, and 109 to 129; these read WGNGLEFLMSCISVSVGLGNV, GAFLIPYIIVLFLIGKPMYYL, and SVVPGFVGVGYGQAFGTICII. N-linked (GlcNAc...) asparagine glycans are attached at residues asparagine 183 and asparagine 188. 9 helical membrane passes run 229 to 249, 258 to 278, 307 to 327, 341 to 361, 401 to 421, 441 to 461, 474 to 494, 516 to 536, and 552 to 572; these read PDWKLTLALFVAWVVIFLVIM, AAYFLALFPYVVLFVLLIRAV, AVVQCFFSLAVGSGPIIMFAS, IVTTLDTLTSLLGGITIFAIL, LFSVLFFFMLFVLGIGSIVAL, VALITSACGFLMGLVYVTPGG, TYVVFILAIFELAGIVWVYGL, CWSFFTPVMMIIIFIYSMATI, and IAGWLLFAIGAAQFPLWGLWY.

It belongs to the sodium:neurotransmitter symporter (SNF) (TC 2.A.22) family.

It is found in the membrane. Functionally, unusual broad substrate spectrum amino acid:sodium cotransporter that promotes absorption of the D isomers of essential amino acids. Neutral amino acids are the preferred substrates, especially methionine and phenylalanine. This Drosophila yakuba (Fruit fly) protein is Sodium-dependent nutrient amino acid transporter 1.